A 206-amino-acid chain; its full sequence is Putative apoptosis inhibitor 021L (206 aa).

Polar residues predominate over residues 95-105 (TSKSPVSNQPS). A disordered region spans residues 95-114 (TSKSPVSNQPSPEEDEPIPD). The RING-type zinc finger occupies 157 to 195 (CVVCQANVRNVVFVPCNHLATCISCSANPLMPKKCPMCR).

This sequence belongs to the IIV-6 193R family.

Its function is as follows. Plays a role early in infection by preventing host cell apoptosis. The chain is Putative apoptosis inhibitor 021L from Aedes vexans (Inland floodwater mosquito).